The following is a 473-amino-acid chain: Photosystem II CP43 reaction center protein (473 aa).

The propeptide occupies 1–14 (MKTLYSPRRFYPVE). An N-acetylthreonine modification is found at Thr-15. Residue Thr-15 is modified to Phosphothreonine. A run of 5 helical transmembrane segments spans residues 69–93 (LFEV…PHLA), 134–155 (LIGP…KDRN), 178–200 (KALF…RKIT), 255–275 (KPFA…LSYS), and 291–312 (WFNN…ASQA). Glu-367 provides a ligand contact to [CaMn4O5] cluster. The chain crosses the membrane as a helical span at residues 447 to 471 (RARAAAAGFEKGIDRDLEPVLFMTP).

It belongs to the PsbB/PsbC family. PsbC subfamily. In terms of assembly, PSII is composed of 1 copy each of membrane proteins PsbA, PsbB, PsbC, PsbD, PsbE, PsbF, PsbH, PsbI, PsbJ, PsbK, PsbL, PsbM, PsbT, PsbX, PsbY, PsbZ, Psb30/Ycf12, at least 3 peripheral proteins of the oxygen-evolving complex and a large number of cofactors. It forms dimeric complexes. Requires Binds multiple chlorophylls and provides some of the ligands for the Ca-4Mn-5O cluster of the oxygen-evolving complex. It may also provide a ligand for a Cl- that is required for oxygen evolution. PSII binds additional chlorophylls, carotenoids and specific lipids. as cofactor.

Its subcellular location is the plastid. It is found in the chloroplast thylakoid membrane. One of the components of the core complex of photosystem II (PSII). It binds chlorophyll and helps catalyze the primary light-induced photochemical processes of PSII. PSII is a light-driven water:plastoquinone oxidoreductase, using light energy to abstract electrons from H(2)O, generating O(2) and a proton gradient subsequently used for ATP formation. The chain is Photosystem II CP43 reaction center protein from Welwitschia mirabilis (Tree tumbo).